The sequence spans 222 residues: uncharacterized protein (222 aa).

Belongs to the ycf73 family.

The protein resides in the plastid. Its subcellular location is the chloroplast. This is an uncharacterized protein from Oryza nivara (Indian wild rice).